Reading from the N-terminus, the 271-residue chain is Troponin T, fast skeletal muscle (271 aa).

The segment covering Met1–Glu21 has biased composition (acidic residues). The disordered stretch occupies residues Met1–Lys74. N-acetylserine is present on Ser2. Ser2 carries the post-translational modification Phosphoserine. Basic and acidic residues-rich tracts occupy residues Glu29–Arg53 and Pro62–Lys74. Ser90 is subject to Phosphoserine. The segment covering Arg113–Lys155 has biased composition (basic and acidic residues). A disordered region spans residues Arg113–Leu192. Ser161, Ser168, and Ser169 each carry phosphoserine. Over residues Thr183 to Leu192 the composition is skewed to basic and acidic residues. The residue at position 205 (Ser205) is a Phosphoserine. Tyr221 is subject to Phosphotyrosine. Positions Asp249–Lys271 are disordered.

The protein belongs to the troponin T family.

Troponin T is the tropomyosin-binding subunit of troponin, the thin filament regulatory complex which confers calcium-sensitivity to striated muscle actomyosin ATPase activity. The polypeptide is Troponin T, fast skeletal muscle (TNNT3) (Sus scrofa (Pig)).